The sequence spans 208 residues: Ribosomal RNA large subunit methyltransferase E (208 aa).

The S-adenosyl-L-methionine site is built by Gly62, Trp64, Asp82, Asp98, and Asp123. The active-site Proton acceptor is the Lys163.

Belongs to the class I-like SAM-binding methyltransferase superfamily. RNA methyltransferase RlmE family.

It localises to the cytoplasm. It catalyses the reaction uridine(2552) in 23S rRNA + S-adenosyl-L-methionine = 2'-O-methyluridine(2552) in 23S rRNA + S-adenosyl-L-homocysteine + H(+). Functionally, specifically methylates the uridine in position 2552 of 23S rRNA at the 2'-O position of the ribose in the fully assembled 50S ribosomal subunit. This chain is Ribosomal RNA large subunit methyltransferase E, found in Glaesserella parasuis serovar 5 (strain SH0165) (Haemophilus parasuis).